The primary structure comprises 282 residues: Parvulin-like PPIase (282 aa).

Positions 1-20 are cleaved as a signal peptide; the sequence is MKKLSVIFLSVSMLSSIAFC. The 94-residue stretch at 138-231 folds into the PpiC domain; sequence KEQIKVAHIL…FGWHIIKVLE (94 aa).

This sequence belongs to the PpiC/parvulin rotamase family.

The protein localises to the cell outer membrane. It carries out the reaction [protein]-peptidylproline (omega=180) = [protein]-peptidylproline (omega=0). The chain is Parvulin-like PPIase (plp) from Rickettsia typhi (strain ATCC VR-144 / Wilmington).